A 204-amino-acid chain; its full sequence is Double homeobox protein A (204 aa).

Residues 15 to 74 (HRRCRTKFTEEQLKILINTFNQKPYPGYATKQKLALEINTEESRIQIWFQNRRARHGFQK) constitute a DNA-binding region (homeobox 1). 2 disordered regions span residues 73 to 101 (QKRPEAETLESSQSQGQDQPGVEFQSREA) and 163 to 204 (EPVA…ARTW). Over residues 81 to 90 (LESSQSQGQD) the composition is skewed to polar residues. Residues 101–160 (ARRCRTTYSASQLHTLIKAFMKNPYPGIDSREELAKEIGVPESRVQIWFQNRRSRLLLQR) constitute a DNA-binding region (homeobox 2). Positions 184-197 (EDTQNGTNFTSDSH) are enriched in polar residues.

Belongs to the paired homeobox family. Expressed in embryonic stem cells.

The protein resides in the nucleus. Its function is as follows. Transcription factor that acts as a repressor. The protein is Double homeobox protein A of Homo sapiens (Human).